Reading from the N-terminus, the 272-residue chain is SKA complex subunit 1 homolog (272 aa).

A coiled-coil region spans residues 48–75 (ALSSMELQVQSIKDRLREETEAIPKAKK).

This sequence belongs to the SKA1 family.

This is SKA complex subunit 1 homolog from Arabidopsis thaliana (Mouse-ear cress).